Consider the following 584-residue polypeptide: Extracellular serine/threonine protein kinase FAM20C (584 aa).

At 1 to 10 (MKMMLVRRFR) the chain is on the cytoplasmic side. The propeptide occupies 1–92 (MKMMLVRRFR…PNKHTLRILQ (92 aa)). A helical; Signal-anchor for type II membrane protein membrane pass occupies residues 11 to 31 (VLILMVFLVACALHIALDLLP). Topologically, residues 32-584 (RLERRGARPS…DTEHRAASAR (553 aa)) are lumenal. Disordered stretches follow at residues 62–81 (QVRG…GDAG) and 94–159 (FSSD…GDAS). 2 stretches are compositionally biased toward low complexity: residues 71 to 81 (PAASSAAGDAG) and 95 to 112 (SSDP…KLPP). The N-linked (GlcNAc...) asparagine glycan is linked to N101. Position 106 is a phosphoserine (S106). Positions 116 to 149 (PAERALRGRDPGALRPHDPAHRPLLRDPGPRRSE) are enriched in basic and acidic residues. Q269, K285, and E306 together coordinate ATP. Residue E306 participates in Mn(2+) binding. The N-linked (GlcNAc...) asparagine glycan is linked to N335. A kinase domain region spans residues 354-565 (FISPANNICF…AVRDCVERNG (212 aa)). Disulfide bonds link C362/C378 and C367/C371. An ATP-binding site is contributed by 389–392 (AAFL). Cystine bridges form between C426–C500 and C501–C560. D458 is a catalytic residue. E463 provides a ligand contact to ATP. N-linked (GlcNAc...) asparagine glycosylation is present at N470. D478 contacts ATP. Residue D478 participates in Mn(2+) binding.

Belongs to the FAM20 family. Homodimer; disulfide-linked. Interacts with FAM20A; probably forming a heterotetramer of 2 subunits of FAM20A and 2 subunits of FAM20C. Interacts with protease MBTPS1/S1P; the interaction results in FAM20C cleavage and secretion. Interacts with COPII components SEC23A and SEC24A; transport of FAM20C from the endoplasmic reticulum to the Golgi is likely to be mediated by COPII vesicles. The cofactor is Mn(2+). Post-translationally, N-glycosylation is required for folding. Autophosphorylated. In terms of processing, propeptide cleavage by MBTPS1/S1P promotes FAM20C secretion and maximal kinase activity which is essential for efficient osteoblast differentiation and biomineralization. As to expression, widely expressed.

The protein localises to the golgi apparatus membrane. Its subcellular location is the secreted. The protein resides in the endoplasmic reticulum. The catalysed reaction is L-seryl-[protein] + ATP = O-phospho-L-seryl-[protein] + ADP + H(+). It catalyses the reaction L-threonyl-[protein] + ATP = O-phospho-L-threonyl-[protein] + ADP + H(+). Serine/threonine protein kinase activity is increased upon interaction with FAM20A. In terms of biological role, golgi serine/threonine protein kinase that phosphorylates secretory pathway proteins within Ser-x-Glu/pSer motifs and plays a key role in biomineralization of bones and teeth. Constitutes the main protein kinase for extracellular proteins, generating the majority of the extracellular phosphoproteome. Mainly phosphorylates proteins within the Ser-x-Glu/pSer motif, but also displays a broader substrate specificity. Phosphorylates ERO1A, enhancing its activity which is required to maintain endoplasmic reticulum redox homeostasis and for oxidative protein folding. During endoplasmic reticulum stress, phosphorylates P4HB/PDIA1 which induces a functional switch, causing P4HB to change from an oxidoreductase to a molecular chaperone. This is critical to maintain ER proteostasis and reduce cell death under ER stress. Phosphorylation of P4HB also promotes its interaction with ERN1, leading to reduced activity of ERN1, a key sensor for the endoplasmic reticulum unfolded protein response. Required for osteoblast differentiation and mineralization. Phosphorylates casein as well as a number of proteins involved in biomineralization such as AMELX, AMTN, ENAM and SPP1/OPN. In addition to its role in biomineralization, also plays a role in lipid homeostasis, wound healing and cell migration and adhesion. The chain is Extracellular serine/threonine protein kinase FAM20C from Homo sapiens (Human).